We begin with the raw amino-acid sequence, 437 residues long: tRNA wybutosine-synthesizing protein 2 homolog (437 aa).

Residues serine 208, lysine 215, glutamate 255, and aspartate 283–asparagine 284 contribute to the S-adenosyl-L-methionine site. Residues serine 331 to asparagine 344 show a composition bias toward polar residues. A disordered region spans residues serine 331–serine 374.

This sequence belongs to the class I-like SAM-binding methyltransferase superfamily. TRM5/TYW2 family.

The enzyme catalyses 4-demethylwyosine(37) in tRNA(Phe) + S-adenosyl-L-methionine = 4-demethyl-7-[(3S)-3-amino-3-carboxypropyl]wyosine(37) in tRNA(Phe) + S-methyl-5'-thioadenosine + H(+). Its pathway is tRNA modification; wybutosine-tRNA(Phe) biosynthesis. Its function is as follows. S-adenosyl-L-methionine-dependent transferase that acts as a component of the wybutosine biosynthesis pathway. Wybutosine is a hyper modified guanosine with a tricyclic base found at the 3'-position adjacent to the anticodon of eukaryotic phenylalanine tRNA. Catalyzes the transfer of the alpha-amino-alpha-carboxypropyl (acp) group from S-adenosyl-L-methionine to the C-7 position of 4-demethylwyosine (imG-14) to produce wybutosine-86. The chain is tRNA wybutosine-synthesizing protein 2 homolog (Trmt12) from Rattus norvegicus (Rat).